Reading from the N-terminus, the 344-residue chain is Ribosomal RNA large subunit methyltransferase Cfr (344 aa).

Residue Glu90 is the Proton acceptor of the active site. A Radical SAM core domain is found at 97 to 330; that stretch reads KQGWESFCIS…ATVRTQFGSE (234 aa). A disulfide bond links Cys104 and Cys335. Residues Cys111, Cys115, and Cys118 each coordinate [4Fe-4S] cluster. S-adenosyl-L-methionine-binding positions include 157–158, Ser188, 211–213, and Asn292; these read GE and SLH. The active-site S-methylcysteine intermediate is the Cys335.

This sequence belongs to the radical SAM superfamily. RlmN family. Cfr subfamily. Requires [4Fe-4S] cluster as cofactor.

Its subcellular location is the cytoplasm. The enzyme catalyses adenosine(2503) in 23S rRNA + 2 reduced [2Fe-2S]-[ferredoxin] + 2 S-adenosyl-L-methionine = 8-methyladenosine(2503) in 23S rRNA + 5'-deoxyadenosine + L-methionine + 2 oxidized [2Fe-2S]-[ferredoxin] + S-adenosyl-L-homocysteine. Functionally, specifically methylates position 8 of adenine 2503 in 23S rRNA. Confers resistance to some classes of antibiotics. This is Ribosomal RNA large subunit methyltransferase Cfr from Clostridium botulinum (strain Loch Maree / Type A3).